The sequence spans 340 residues: Uroporphyrinogen decarboxylase (340 aa).

Substrate is bound by residues 21–25, Phe-40, Asp-71, Tyr-147, Ser-202, and His-316; that span reads RQAGR.

This sequence belongs to the uroporphyrinogen decarboxylase family. In terms of assembly, homodimer.

It is found in the cytoplasm. The enzyme catalyses uroporphyrinogen III + 4 H(+) = coproporphyrinogen III + 4 CO2. Its pathway is porphyrin-containing compound metabolism; protoporphyrin-IX biosynthesis; coproporphyrinogen-III from 5-aminolevulinate: step 4/4. Its function is as follows. Catalyzes the decarboxylation of four acetate groups of uroporphyrinogen-III to yield coproporphyrinogen-III. In Helicobacter hepaticus (strain ATCC 51449 / 3B1), this protein is Uroporphyrinogen decarboxylase.